Reading from the N-terminus, the 103-residue chain is Co-chaperonin GroES (103 aa).

It belongs to the GroES chaperonin family. Heptamer of 7 subunits arranged in a ring. Interacts with the chaperonin GroEL.

Its subcellular location is the cytoplasm. In terms of biological role, together with the chaperonin GroEL, plays an essential role in assisting protein folding. The GroEL-GroES system forms a nano-cage that allows encapsulation of the non-native substrate proteins and provides a physical environment optimized to promote and accelerate protein folding. GroES binds to the apical surface of the GroEL ring, thereby capping the opening of the GroEL channel. This chain is Co-chaperonin GroES, found in Synechococcus sp. (strain WH7803).